A 356-amino-acid polypeptide reads, in one-letter code: MTNIVPRILGFVLFVLGAAIFLTEVMHSYHRFVKQSEEYSISNSNTDDAPTKKKQMKAFFSLYHNMDELKAQNSDVVQPRVLKGTAREFCNNTDHCIRPFLNHETRYRVAPDYKMAHCVVHKSMSTVITGIWCYLFNRNRFVRVDKQMNMSEWDKESLCRGDNTFRHLKSLQKKYNASEMTGWSLSMITRDPIDRFISGYVDRCIRVAEGPSPCNGCDKNMTCFILSEYERFKKQAHKGVLTNTFEDRHFYPQNWRCDIKTMRNKYEFIRYSSDASKELMEDLFKIARRQGIPEKELEYIENELTKNRKTSHTTAYSPAREFFQRRLRESPLLMEYVVRMFYHDFVILNYPLPEGF.

The helical transmembrane segment at 8 to 28 (ILGFVLFVLGAAIFLTEVMHS) threads the bilayer.

To C.elegans C41C4.1 and C18B2.1.

It is found in the membrane. This is an uncharacterized protein from Caenorhabditis elegans.